Here is a 407-residue protein sequence, read N- to C-terminus: Arginine biosynthesis bifunctional protein ArgJ (407 aa).

6 residues coordinate substrate: threonine 157, lysine 183, threonine 194, glutamate 280, asparagine 402, and threonine 407. Threonine 194 functions as the Nucleophile in the catalytic mechanism.

Belongs to the ArgJ family. As to quaternary structure, heterotetramer of two alpha and two beta chains.

It localises to the cytoplasm. The catalysed reaction is N(2)-acetyl-L-ornithine + L-glutamate = N-acetyl-L-glutamate + L-ornithine. The enzyme catalyses L-glutamate + acetyl-CoA = N-acetyl-L-glutamate + CoA + H(+). Its pathway is amino-acid biosynthesis; L-arginine biosynthesis; L-ornithine and N-acetyl-L-glutamate from L-glutamate and N(2)-acetyl-L-ornithine (cyclic): step 1/1. The protein operates within amino-acid biosynthesis; L-arginine biosynthesis; N(2)-acetyl-L-ornithine from L-glutamate: step 1/4. Functionally, catalyzes two activities which are involved in the cyclic version of arginine biosynthesis: the synthesis of N-acetylglutamate from glutamate and acetyl-CoA as the acetyl donor, and of ornithine by transacetylation between N(2)-acetylornithine and glutamate. The protein is Arginine biosynthesis bifunctional protein ArgJ of Bacillus cereus (strain ATCC 10987 / NRS 248).